The chain runs to 156 residues: Small ribosomal subunit protein uS7 (156 aa).

As to quaternary structure, part of the 30S ribosomal subunit. Contacts proteins S9 and S11.

One of the primary rRNA binding proteins, it binds directly to 16S rRNA where it nucleates assembly of the head domain of the 30S subunit. Is located at the subunit interface close to the decoding center, probably blocks exit of the E-site tRNA. This is Small ribosomal subunit protein uS7 from Rhodopseudomonas palustris (strain ATCC BAA-98 / CGA009).